Here is a 154-residue protein sequence, read N- to C-terminus: Small ribosomal subunit protein bS18 (154 aa).

A disordered region spans residues 1 to 82 (MEKKTTKKAT…PFAKYNRGYP (82 aa)). The segment covering 8 to 19 (KATASKTTTTKK) has biased composition (low complexity). Residues 20 to 32 (AAAEKTEIKETKK) are compositionally biased toward basic and acidic residues. Residues 33–49 (TTTTKTSTAKKATTASV) show a composition bias toward low complexity. The span at 50–69 (EKTEVKETKKSSDNKKEFNP) shows a compositional bias: basic and acidic residues.

Belongs to the bacterial ribosomal protein bS18 family. In terms of assembly, part of the 30S ribosomal subunit. Forms a tight heterodimer with protein bS6.

In terms of biological role, binds as a heterodimer with protein bS6 to the central domain of the 16S rRNA, where it helps stabilize the platform of the 30S subunit. The polypeptide is Small ribosomal subunit protein bS18 (Malacoplasma penetrans (strain HF-2) (Mycoplasma penetrans)).